The primary structure comprises 545 residues: Probable protein kinase UbiB (545 aa).

In terms of domain architecture, Protein kinase spans 123-501 (DFDIVPLASA…RVRQHQSHYL (379 aa)). Residues 129–137 (LASASIAQV) and Lys152 contribute to the ATP site. Asp287 serves as the catalytic Proton acceptor. 2 helical membrane passes run 498–518 (SHYL…VVLS) and 521–541 (EWDG…LVGW).

The protein belongs to the ABC1 family. UbiB subfamily.

The protein resides in the cell inner membrane. It participates in cofactor biosynthesis; ubiquinone biosynthesis [regulation]. Its function is as follows. Is probably a protein kinase regulator of UbiI activity which is involved in aerobic coenzyme Q (ubiquinone) biosynthesis. This is Probable protein kinase UbiB from Erwinia tasmaniensis (strain DSM 17950 / CFBP 7177 / CIP 109463 / NCPPB 4357 / Et1/99).